The chain runs to 587 residues: ASI1-immunoprecipitated protein 3 (587 aa).

Residues 1-118 (MVLSRRFAQV…NVTGKGKGKR (118 aa)) are disordered. Residues 66-98 (EDEDMAEGDDDQAEEETNPEAEEEEDEEEEEKP) are compositionally biased toward acidic residues. The 120-residue stretch at 129–248 (NTYDLEVPVL…TVEKKLWKLT (120 aa)) folds into the BAH domain. Positions 344–493 (HRDKCLGKLL…RMQMTSVRCS (150 aa)) constitute a TFIIS central domain. 2 disordered regions span residues 371-396 (EAKV…GKDE) and 539-587 (TDKP…KKPE). Over residues 560–570 (ETNKPKDEALK) the composition is skewed to basic and acidic residues. Residues 571–581 (TNDSNADNNPE) are compositionally biased toward polar residues.

In terms of assembly, interacts with MOM1. Component of the ASI1-AIPP1-EDM2 (AAE) RNA regulatory complex composed of at least AIPP1/EDM3, ASI1 and EDM2 and may contain CPL2, AIPP2 and AIPP3/BDT1. Part of the BAH-PHD bivalent histone reader complex that contains AIPP2, PAIPP2 and AIPP3/BDT1; the BAH-PHD module associates with CPL2 to form the BAH-PHD-CPL2 complex (BPC) for transcriptional repression. Binds directly to CPL2, PHD1, PAIPP2/PHD2, AIPP2/PHD3, PHD4, PHD5 and PHD6. Expressed ubiquitously.

It is found in the nucleus. Its function is as follows. Transcriptional repressor. Together with PHD finger-containing proteins (e.g. PHD1, PAIPP2/PHD2, AIPP2/PHD3, PHD4, PHD5 and PHD6), cooperates to form a BAH-PHD bivalent histone reader complex able to read histone H3 lysine 27 trimethylation (H3K27me3) and low-methylated H3K4 histone marks in order to regulate transcription, especially to prevent early flowering; H3K27me3 reader of this complex. CPL2 is subsequently recruited to form a BAH-PHD-CPL2 complex (BPC) in order to silence several H3K27me3 and low-methylated H3K4 enriched loci, including AGO5, via the phosphorylation state-dependent inhibition of Pol II release from the transcriptional start site (e.g. Ser5P-Pol II dephosphorylation). The BPC complex represses flowering by inhibiting the expression of several genes, including AGL6, FT, FUL and SOC1. Prevents the accumulation of intronic heterochromatin-containing genes (e.g. IBM1, At3g05410 and RPP7). Seems to not be involved in vernalization establishment, by contrast to orthologs in grass plants. The chain is ASI1-immunoprecipitated protein 3 from Arabidopsis thaliana (Mouse-ear cress).